The primary structure comprises 317 residues: Small ribosomal subunit protein uS2 (317 aa).

Ser2 bears the N-acetylserine mark. Laminin-binding stretches follow at residues 161–180 and 205–229; these read IPCN…MLSR and RDPE…EFQG. [DE]-W-[ST] repeat units follow at residues 230 to 232 and 245 to 247; these read EWT and DWS. Residues 242 to 317 are laminin-binding; that stretch reads EVADWSEGVA…EWGGASADWS (76 aa). A compositionally biased stretch (low complexity) spans 271–284; the sequence is EAAAPSKAPAAAEG. Residues 271–317 form a disordered region; that stretch reads EAAAPSKAPAAAEGFAEDWSAQPATEDWSAAPTAQATEWGGASADWS. 3 [DE]-W-[ST] repeats span residues 288 to 290, 297 to 299, and 315 to 317; these read DWS.

Belongs to the universal ribosomal protein uS2 family. As to quaternary structure, monomer (37LRP) and homodimer (67LR). Component of the small ribosomal subunit. Mature ribosomes consist of a small (40S) and a large (60S) subunit. The 40S subunit contains about 33 different proteins and 1 molecule of RNA (18S). The 60S subunit contains about 49 different proteins and 3 molecules of RNA (28S, 5.8S and 5S). Interacts with rps21. Interacts with several laminins including at least lamb1. Interacts with mdk. Acylated. Acylation may be a prerequisite for conversion of the monomeric 37 kDa laminin receptor precursor (37LRP) to the mature dimeric 67 kDa laminin receptor (67LR), and may provide a mechanism for membrane association. Post-translationally, cleaved by stromelysin-3 (ST3) at the cell surface. Cleavage by stromelysin-3 may be a mechanism to alter cell-extracellular matrix interactions.

The protein localises to the cell membrane. Its subcellular location is the cytoplasm. It is found in the nucleus. Required for the assembly and/or stability of the 40S ribosomal subunit. Required for the processing of the 20S rRNA-precursor to mature 18S rRNA in a late step of the maturation of 40S ribosomal subunits. Also functions as a cell surface receptor for laminin. Plays a role in cell adhesion to the basement membrane and in the consequent activation of signaling transduction pathways. May play a role in cell fate determination and tissue morphogenesis. The polypeptide is Small ribosomal subunit protein uS2 (rpsa) (Salmo salar (Atlantic salmon)).